An 846-amino-acid polypeptide reads, in one-letter code: Inactive cap-specific mRNA (nucleoside-2'-O-)-methyltransferase 1B (846 aa).

The disordered stretch occupies residues 30 to 50 (DDEDDFVDDPSPTEQKTKAEK). Positions 44–90 (QKTKAEKKMERMGYKAGEGLGKNKQGIQEPIAISFREGKAGLGHEQW) constitute a G-patch domain. The region spanning 184 to 413 (FFLNRSAMKT…ERFVVCKGLR (230 aa)) is the RrmJ-type SAM-dependent 2'-O-MTase domain.

This is Inactive cap-specific mRNA (nucleoside-2'-O-)-methyltransferase 1B from Caenorhabditis briggsae.